The following is a 316-amino-acid chain: Small ribosomal subunit protein mS26 (316 aa).

The segment at 41–71 is disordered; it reads TTRSARDSVSIPPDSPNYIKVPEPPQSSEVR.

This sequence belongs to the mitochondrion-specific ribosomal protein mS26 family. Component of the mitochondrial small ribosomal subunit (mt-SSU). Mature N.crassa 74S mitochondrial ribosomes consist of a small (37S) and a large (54S) subunit. The 37S small subunit contains a 16S ribosomal RNA (16S mt-rRNA) and 32 different proteins. The 54S large subunit contains a 23S rRNA (23S mt-rRNA) and 42 different proteins.

The protein localises to the mitochondrion. Its function is as follows. Component of the mitochondrial ribosome (mitoribosome), a dedicated translation machinery responsible for the synthesis of mitochondrial genome-encoded proteins, including at least some of the essential transmembrane subunits of the mitochondrial respiratory chain. The mitoribosomes are attached to the mitochondrial inner membrane and translation products are cotranslationally integrated into the membrane. This Neurospora crassa (strain ATCC 24698 / 74-OR23-1A / CBS 708.71 / DSM 1257 / FGSC 987) protein is Small ribosomal subunit protein mS26 (pet123).